We begin with the raw amino-acid sequence, 370 residues long: Probable endopolygalacturonase A (370 aa).

The signal sequence occupies residues 1–19 (MPSAKPLFCLATLAGAALA). The propeptide occupies 20–32 (APAPSRVSDFTKR). Residues Cys-35 and Cys-50 are joined by a disulfide bond. PbH1 repeat units follow at residues 162-192 (SDNL…DISE), 193-214 (STYI…AINS), 215-235 (GENI…SIGS), 244-265 (VKNV…RIKT), 273-295 (VEDI…VIEQ), and 307-352 (SNGV…DITG). The active-site Proton donor is the Asp-207. Cys-209 and Cys-225 form a disulfide bridge. His-229 is a catalytic residue. N-linked (GlcNAc...) asparagine glycosylation is present at Asn-246. Disulfide bonds link Cys-335–Cys-340 and Cys-359–Cys-368.

This sequence belongs to the glycosyl hydrolase 28 family.

Its subcellular location is the secreted. It catalyses the reaction (1,4-alpha-D-galacturonosyl)n+m + H2O = (1,4-alpha-D-galacturonosyl)n + (1,4-alpha-D-galacturonosyl)m.. In terms of biological role, involved in maceration and soft-rotting of plant tissue. Hydrolyzes the 1,4-alpha glycosidic bonds of de-esterified pectate in the smooth region of the plant cell wall. The protein is Probable endopolygalacturonase A (pgaA) of Aspergillus niger (strain ATCC MYA-4892 / CBS 513.88 / FGSC A1513).